The chain runs to 84 residues: MKVVLLVCLVWMMAMMELVSCECWSQADCSDGHCCAGSSFSKNCRPYGGDGEQCEPRNKYEAYSTGCPCEENLMCSVINRCQSA.

Positions 1-21 are cleaved as a signal peptide; the sequence is MKVVLLVCLVWMMAMMELVSC. 5 disulfide bridges follow: Cys-23–Cys-35, Cys-29–Cys-44, Cys-34–Cys-67, Cys-54–Cys-75, and Cys-69–Cys-81.

It belongs to the AVIT (prokineticin) family. Expressed by the venom gland.

The protein resides in the secreted. In Cyriopagopus hainanus (Chinese bird spider), this protein is U8-theraphotoxin-Hhn1f.